The chain runs to 472 residues: Zinc finger imprinted 3 (472 aa).

Residues 8–80 (VTFEDVTVNF…EEEVLGSGRA (73 aa)) form the KRAB domain. 11 C2H2-type zinc fingers span residues 167–189 (LKCN…LRRH), 195–217 (FECH…QKTH), 223–245 (YKCE…QKMH), 251–273 (YQCK…EKIH), 279–301 (YQCN…KKVH), 307–329 (FQCT…QRIH), 335–357 (YKCS…EKIH), 363–385 (YECD…KKIH), 391–413 (YECN…QKTH), 419–441 (YRCS…KKTH), and 447–470 (YGCS…KRIH).

Belongs to the krueppel C2H2-type zinc-finger protein family.

The protein resides in the nucleus. May be involved in transcriptional regulation. The protein is Zinc finger imprinted 3 (ZIM3) of Homo sapiens (Human).